Here is a 483-residue protein sequence, read N- to C-terminus: Protein nucleotidyltransferase YdiU (483 aa).

ATP contacts are provided by G81, G83, R84, K103, D115, G116, R166, and R173. Residue D244 is the Proton acceptor of the active site. Mg(2+) contacts are provided by N245 and D254. D254 serves as a coordination point for ATP.

The protein belongs to the SELO family. It depends on Mg(2+) as a cofactor. Mn(2+) serves as cofactor.

It carries out the reaction L-seryl-[protein] + ATP = 3-O-(5'-adenylyl)-L-seryl-[protein] + diphosphate. It catalyses the reaction L-threonyl-[protein] + ATP = 3-O-(5'-adenylyl)-L-threonyl-[protein] + diphosphate. The enzyme catalyses L-tyrosyl-[protein] + ATP = O-(5'-adenylyl)-L-tyrosyl-[protein] + diphosphate. The catalysed reaction is L-histidyl-[protein] + UTP = N(tele)-(5'-uridylyl)-L-histidyl-[protein] + diphosphate. It carries out the reaction L-seryl-[protein] + UTP = O-(5'-uridylyl)-L-seryl-[protein] + diphosphate. It catalyses the reaction L-tyrosyl-[protein] + UTP = O-(5'-uridylyl)-L-tyrosyl-[protein] + diphosphate. Its function is as follows. Nucleotidyltransferase involved in the post-translational modification of proteins. It can catalyze the addition of adenosine monophosphate (AMP) or uridine monophosphate (UMP) to a protein, resulting in modifications known as AMPylation and UMPylation. This chain is Protein nucleotidyltransferase YdiU, found in Shewanella halifaxensis (strain HAW-EB4).